The primary structure comprises 274 residues: 2,3,4,5-tetrahydropyridine-2,6-dicarboxylate N-succinyltransferase (274 aa).

Substrate is bound by residues Arg104 and Asp141.

Belongs to the transferase hexapeptide repeat family. As to quaternary structure, homotrimer.

The protein resides in the cytoplasm. It carries out the reaction (S)-2,3,4,5-tetrahydrodipicolinate + succinyl-CoA + H2O = (S)-2-succinylamino-6-oxoheptanedioate + CoA. The protein operates within amino-acid biosynthesis; L-lysine biosynthesis via DAP pathway; LL-2,6-diaminopimelate from (S)-tetrahydrodipicolinate (succinylase route): step 1/3. This Shewanella baltica (strain OS155 / ATCC BAA-1091) protein is 2,3,4,5-tetrahydropyridine-2,6-dicarboxylate N-succinyltransferase.